Here is a 365-residue protein sequence, read N- to C-terminus: MSVKKAGVLGATGSVGQRFILLLSKHPEFEIHALGASSRSAGKKYKDAASWKQTETLPETEQDIVVQECKPEGNFLECDVVFSGLDADVAGDIEKSFVEAGLAVVSNAKNYRREKDVPLVVPIVNPEHIDVVENKVKQAVSKGGKKPGFIICISNCSTAGLVAPLKPLVEKFGPIDALTTTTLQAISGAGFSPGVSGMDILDNIVPYISGEEDKLEWETKKILGGVNAEGTEFVPIPESEMKVSAQCNRVPVIDGHTECISLRFANRPAPSVEDVKQCLREYECAASKLGCHSAPKQTIHVLDQPDRPQPRLDRDRDSGYGVSVGRIREDSLLDFKMVVLSHNTIIGAAGAGILIAEILKAKNII.

8 residues coordinate NADP(+): T12, G13, S14, V15, S37, S40, L85, and D86. Residue C156 is the Acyl-thioester intermediate of the active site. G188 is an NADP(+) binding site. The active-site Proton acceptor is H256. N343 provides a ligand contact to NADP(+).

The protein belongs to the aspartate-semialdehyde dehydrogenase family. Homotetramer; dimer of dimers.

It localises to the cytoplasm. The protein resides in the cytosol. Its subcellular location is the nucleus. It catalyses the reaction L-aspartate 4-semialdehyde + phosphate + NADP(+) = 4-phospho-L-aspartate + NADPH + H(+). It participates in amino-acid biosynthesis; L-methionine biosynthesis via de novo pathway; L-homoserine from L-aspartate: step 2/3. Its pathway is amino-acid biosynthesis; L-threonine biosynthesis; L-threonine from L-aspartate: step 2/5. Its activity is regulated as follows. Inhibited by the non-competitive inhibitors phthalaldehyde and naphthalene, the competitive inhibitor 1,4-benzoquinone and derivates such as 2-chloro-3-methoxy-1,4-naphthoquinone, 2,3-dichloro-1,4-naphthoquinone, 2-chloro-1,4-naphthoquinone, 2-bromo-1,4-naphthoquinone and 2,3-dichloro-5,8-dihydroxy-1,4-naphthoquinone, and 5-aminoisoquinoline. Inhibited by vinyl sulfones. Catalyzes the NADPH-dependent formation of L-aspartate 4-semialdehyde (L-ASA) by the reductive dephosphorylation of 4-phospho-L-aspartate. Mediates the second step in the biosynthesis of amino acids that derive from aspartate (the aspartate family of amino acids), including methioinine and threonine, the latter of which is a precursor to isoleucine. The sequence is that of Aspartate-semialdehyde dehydrogenase from Candida albicans (strain SC5314 / ATCC MYA-2876) (Yeast).